We begin with the raw amino-acid sequence, 107 residues long: Integration host factor subunit alpha (107 aa).

Belongs to the bacterial histone-like protein family. In terms of assembly, heterodimer of an alpha and a beta chain.

This protein is one of the two subunits of integration host factor, a specific DNA-binding protein that functions in genetic recombination as well as in transcriptional and translational control. This chain is Integration host factor subunit alpha, found in Bartonella tribocorum (strain CIP 105476 / IBS 506).